The following is a 418-amino-acid chain: Centromere protein U (418 aa).

Over residues 1 to 11 the composition is skewed to basic residues; that stretch reads MAPRGRRRPRP. Residues 1–76 form a disordered region; sequence MAPRGRRRPR…TYETFDPPLH (76 aa). The Nuclear localization signal signature appears at 6 to 23; sequence RRRPRPHRSEGARRSKNT. Over residues 12–42 the composition is skewed to basic and acidic residues; the sequence is HRSEGARRSKNTLERTHSMKDKAGQKCKPID. Thr-78 is subject to Phosphothreonine; by PLK1. Positions 88-227 are disordered; sequence SKHCGLSLSS…KRKKSRSKAI (140 aa). Residue Thr-98 is modified to Phosphothreonine. Ser-108 bears the Phosphoserine mark. Thr-110 is modified (phosphothreonine). Ser-111, Ser-116, and Ser-120 each carry phosphoserine. Positions 124-133 are enriched in basic residues; it reads SAKKPGRKLR. Phosphoserine is present on residues Ser-136, Ser-139, and Ser-141. Positions 145–165 are enriched in basic and acidic residues; it reads SDTRRKVKSAEKISTQRHEVI. The segment covering 180–193 has biased composition (polar residues); the sequence is SVTSKKTGPLSAQP. Lys-185 is covalently cross-linked (Glycyl lysine isopeptide (Lys-Gly) (interchain with G-Cter in SUMO2)). A phosphoserine mark is found at Ser-190 and Ser-194. The segment covering 208-224 has biased composition (basic residues); that stretch reads TQKKGKISHDKRKKSRS. Ser-232 is subject to Phosphoserine. Coiled coils occupy residues 297-356 and 397-417; these read QMLT…NAAY and LLGAESHLRNINHQLEKLLDQ. The Nuclear localization signal signature appears at 303 to 320; sequence KRKNAKMISDIEKKRQRM.

Belongs to the CENP-U/AME1 family. As to quaternary structure, component of the CENPA-NAC complex, at least composed of CENPA, CENPC, CENPH, CENPM, CENPN, CENPT and CENPU. The CENPA-NAC complex interacts with the CENPA-CAD complex, composed of CENPI, CENPK, CENPL, CENPO, CENPP, CENPQ, CENPR and CENPS. Interacts with MLF1. Interacts with PLK1. In terms of assembly, (Microbial infection) Interacts with the N-terminal domain of Kaposi's sarcoma-associated herpesvirus latent nuclear antigen (LNA). Phosphorylated by PLK1 at Thr-78, creating a self-tethering site that specifically interacts with the polo-box domain of PLK1. As to expression, expressed at high levels in the testis, fetal liver, thymus, bone marrow and at lower levels in the lymph nodes, placenta, colon and spleen. Present in all cell lines examined, including B-cells, T-cells, epithelial cells and fibroblast cells. Expressed at high levels in glioblastoma cell lines.

The protein resides in the cytoplasm. The protein localises to the nucleus. Its subcellular location is the chromosome. It localises to the centromere. It is found in the kinetochore. Component of the CENPA-NAC (nucleosome-associated) complex, a complex that plays a central role in assembly of kinetochore proteins, mitotic progression and chromosome segregation. The CENPA-NAC complex recruits the CENPA-CAD (nucleosome distal) complex and may be involved in incorporation of newly synthesized CENPA into centromeres. Plays an important role in the correct PLK1 localization to the mitotic kinetochores. A scaffold protein responsible for the initial recruitment and maintenance of the kinetochore PLK1 population until its degradation. Involved in transcriptional repression. This is Centromere protein U (CENPU) from Homo sapiens (Human).